Consider the following 390-residue polypeptide: Ureide permease 1 (390 aa).

Residues 1-9 (MYMIESKGG) are Extracellular-facing. A helical membrane pass occupies residues 10–30 (AIACMLLALLFLGTWPAIMTL). The Cytoplasmic segment spans residues 31–44 (TERRGRLPQHTYLD). Residues 45-65 (YTLTNLLAAVIIALTLGEIGP) form a helical membrane-spanning segment. Topologically, residues 66–78 (SRPNFFTQLSQDN) are extracellular. Residues 79 to 99 (WQSVMFAMAGGIVLSLGNLAT) traverse the membrane as a helical segment. Over 100 to 101 (QY) the chain is Cytoplasmic. The chain crosses the membrane as a helical span at residues 102 to 122 (AWAYVGLSVTEVITASITVVI). Over 123–136 (GTTLNYFLDDRINR) the chain is Extracellular. The chain crosses the membrane as a helical span at residues 137–157 (AEVLFPGVACFLIAVCFGSAV). At 158–221 (HKSNAADNKT…RAIKVFGKST (64 aa)) the chain is on the cytoplasmic side. 213–220 (AIKVFGKS) is a binding site for ATP. Residues 222–242 (IIGLVITFFAGICFSLFSPAF) form a helical membrane-spanning segment. Residues 243–261 (NLATNDQWHTLKHGVPKLN) lie on the Extracellular side of the membrane. The helical transmembrane segment at 262 to 282 (VYTAFFYFSISAFVVALILNI) threads the bilayer. Topologically, residues 283–307 (RFLYWPILGLPRSSFKAYLNDWNGR) are cytoplasmic. The chain crosses the membrane as a helical span at residues 308–328 (GWSFLAGFLCGFGNGLQFMGG). The Extracellular segment spans residues 329-333 (QAAGY). A helical transmembrane segment spans residues 334 to 354 (AAADAVQALPLVSTFWGILLF). Residues 355–363 (GEYRRSSRK) lie on the Cytoplasmic side of the membrane. A helical membrane pass occupies residues 364–384 (TYTLLISMLLMFIVAVAVLMA). Over 385–390 (SSGHRK) the chain is Extracellular.

Belongs to the plant ureide permease (TC 2.A.7.19) family. As to expression, expressed in leaves, flowers, roots and stems.

It localises to the membrane. Functionally, proton-coupled transporter that transports a wide spectrum of oxo derivatives of heterocyclic nitrogen compounds, including allantoin, uric acid and xanthine, but not adenine. Mediates high affinity transport of uracil and 5-fluorouracil (a toxic uracil analog). Mediates transport of free pyrimidines and may function during early seedling development in salvage pathways, by the utilization of pyrimidines from seed storage tissue. The protein is Ureide permease 1 of Arabidopsis thaliana (Mouse-ear cress).